We begin with the raw amino-acid sequence, 262 residues long: Expansin-A7 (262 aa).

An N-terminal signal peptide occupies residues 1–30; the sequence is MGPISSSWSFNKFFSIVFVVFAISGEFVAG. The region spanning 55 to 167 is the Expansin-like EG45 domain; that stretch reads GGACGYGNLF…RRVPCQRSGG (113 aa). Cystine bridges form between C58/C86, C89/C162, and C94/C100. The Expansin-like CBD domain maps to 177 to 257; that stretch reads YWLLIFVMNV…NWSGGKTYKS (81 aa).

This sequence belongs to the expansin family. Expansin A subfamily.

The protein resides in the secreted. It localises to the cell wall. Its subcellular location is the membrane. In terms of biological role, causes loosening and extension of plant cell walls by disrupting non-covalent bonding between cellulose microfibrils and matrix glucans. No enzymatic activity has been found. The protein is Expansin-A7 (EXPA7) of Arabidopsis thaliana (Mouse-ear cress).